The sequence spans 725 residues: A-type inclusion protein A25 (725 aa).

2 coiled-coil regions span residues 418 to 521 and 547 to 719; these read GNSG…RNGK and EIDK…NAET. 4 consecutive repeat copies span residues 609 to 635, 636 to 663, 664 to 687, and 699 to 725. The interval 609 to 718 is 4 X approximate tandem repeats; it reads VRRELEEERR…CRRNNETNAE (110 aa).

This sequence belongs to the poxviridae A25 protein family. Interacts (via N-terminus) with protein A26.

It is found in the virion. Its function is as follows. Structural protein that forms a matrix surrounding the mature virion (MV) through interaction with protein A26. Presence of protein A25 in the virion structurally prevents direct virus-cell fusion mechanism. This is A-type inclusion protein A25 from Vaccinia virus (strain Western Reserve) (VACV).